The primary structure comprises 158 residues: Transcriptional regulator MraZ (158 aa).

2 SpoVT-AbrB domains span residues T7–A57 and A86–A129. The segment at R133 to A158 is disordered.

The protein belongs to the MraZ family. As to quaternary structure, forms oligomers.

The protein localises to the cytoplasm. It localises to the nucleoid. In Gluconacetobacter diazotrophicus (strain ATCC 49037 / DSM 5601 / CCUG 37298 / CIP 103539 / LMG 7603 / PAl5), this protein is Transcriptional regulator MraZ.